A 555-amino-acid polypeptide reads, in one-letter code: Galectin-3-binding protein (555 aa).

Positions 1-18 (MAPLRLFWIWLLVVGTRG) are cleaved as a signal peptide. The SRCR domain maps to 24-124 (MRLADGGSAN…HDKDASVICT (101 aa)). Cystine bridges form between cysteine 49–cysteine 113, cysteine 62–cysteine 123, and cysteine 93–cysteine 103. The N-linked (GlcNAc...) asparagine glycan is linked to asparagine 69. Asparagine 125 carries an N-linked (GlcNAc...) asparagine glycan. The region spanning 153–221 (CDLFITVKVR…LYSRRIDVSL (69 aa)) is the BTB domain. Residues 260–360 (PLELYAYALA…MPPQDLFSLQ (101 aa)) form the BACK domain. N-linked (GlcNAc...) asparagine glycans are attached at residues asparagine 362, asparagine 398, and asparagine 550.

In terms of assembly, homodimers and homomultimers. The multimers form ring-like structures with a diameter of 30-40 nm. Binds LGALS1 and LGALS3. Binds ITGB1, COL4A1, COL5A1, COL6A1, FN1 and NID. Interacts with the gamma-tubulin ring complex (gamma-TuRC), composed of gamma-tubulin, TUBGCP2, TUBGCP3, TUBGCP4, TUBGCP5 and TUBGCP6. The unglycosylated form interacts with PDE4DIP; this interaction, which is PDE4DIP isoform-specific, may connect a pericentrosomal complex, made of AKAP9, CDK5RAP2, EB1/MAPRE1 and PDE4DIP, to the gamma-tubulin ring complex (gamma-TuRC) to promote microtubule assembly and acetylation.

The protein localises to the secreted. It is found in the extracellular space. Its subcellular location is the extracellular matrix. Functionally, promotes integrin-mediated cell adhesion. May stimulate host defense against viruses and tumor cells. The protein is Galectin-3-binding protein (LGALS3BP) of Bos taurus (Bovine).